The following is a 728-amino-acid chain: Catalase-peroxidase 2 (728 aa).

Residues 1 to 20 (MSNEGKCPFNHGKRNGTTNR) are disordered. The segment at residues 91–214 (WHSAGTYRTG…LAAVQMGLIY (124 aa)) is a cross-link (tryptophyl-tyrosyl-methioninium (Trp-Tyr) (with M-240)). The active-site Proton acceptor is H92. The tryptophyl-tyrosyl-methioninium (Tyr-Met) (with W-91) cross-link spans 214 to 240 (YVNPEGPNGNPDPLASARDIRETFARM). H255 contributes to the heme b binding site. The tract at residues 335–355 (AHQWQPKGGAGADSVPDPFEP) is disordered.

The protein belongs to the peroxidase family. Peroxidase/catalase subfamily. As to quaternary structure, homodimer or homotetramer. Heme b is required as a cofactor. In terms of processing, formation of the three residue Trp-Tyr-Met cross-link is important for the catalase, but not the peroxidase activity of the enzyme.

The enzyme catalyses H2O2 + AH2 = A + 2 H2O. It catalyses the reaction 2 H2O2 = O2 + 2 H2O. Bifunctional enzyme with both catalase and broad-spectrum peroxidase activity. The polypeptide is Catalase-peroxidase 2 (Burkholderia cenocepacia (strain HI2424)).